Here is a 524-residue protein sequence, read N- to C-terminus: Bifunctional purine biosynthesis protein PurH (524 aa).

In terms of domain architecture, MGS-like spans 1-144; the sequence is MTRRALVSVS…KNSAHVGVVV (144 aa).

Belongs to the PurH family.

The enzyme catalyses (6R)-10-formyltetrahydrofolate + 5-amino-1-(5-phospho-beta-D-ribosyl)imidazole-4-carboxamide = 5-formamido-1-(5-phospho-D-ribosyl)imidazole-4-carboxamide + (6S)-5,6,7,8-tetrahydrofolate. It carries out the reaction IMP + H2O = 5-formamido-1-(5-phospho-D-ribosyl)imidazole-4-carboxamide. It functions in the pathway purine metabolism; IMP biosynthesis via de novo pathway; 5-formamido-1-(5-phospho-D-ribosyl)imidazole-4-carboxamide from 5-amino-1-(5-phospho-D-ribosyl)imidazole-4-carboxamide (10-formyl THF route): step 1/1. Its pathway is purine metabolism; IMP biosynthesis via de novo pathway; IMP from 5-formamido-1-(5-phospho-D-ribosyl)imidazole-4-carboxamide: step 1/1. The sequence is that of Bifunctional purine biosynthesis protein PurH from Anaeromyxobacter dehalogenans (strain 2CP-1 / ATCC BAA-258).